Reading from the N-terminus, the 336-residue chain is Dihydroorotate dehydrogenase (quinone) (336 aa).

FMN is bound by residues 62 to 66 (AGLDK) and T86. K66 serves as a coordination point for substrate. 111-115 (NRMGF) is a binding site for substrate. Positions 139 and 172 each coordinate FMN. N172 is a binding site for substrate. S175 functions as the Nucleophile in the catalytic mechanism. A substrate-binding site is contributed by N177. FMN is bound by residues K217 and T245. 246 to 247 (NT) contacts substrate. FMN is bound by residues G268, G297, and 318–319 (YS).

It belongs to the dihydroorotate dehydrogenase family. Type 2 subfamily. As to quaternary structure, monomer. FMN is required as a cofactor.

The protein resides in the cell membrane. It carries out the reaction (S)-dihydroorotate + a quinone = orotate + a quinol. Its pathway is pyrimidine metabolism; UMP biosynthesis via de novo pathway; orotate from (S)-dihydroorotate (quinone route): step 1/1. Its function is as follows. Catalyzes the conversion of dihydroorotate to orotate with quinone as electron acceptor. This is Dihydroorotate dehydrogenase (quinone) from Escherichia coli O17:K52:H18 (strain UMN026 / ExPEC).